A 441-amino-acid polypeptide reads, in one-letter code: MAAVAVVGAGKSGQAAARWLALGGRRVVLWDGRDSEALRVVAGALAPFGVEAVLGREFVPEEPDLSLVVVSPGVRWDHPGLVAARARGVTVTGEVGLAWESLSHRRWLCVTGTNGKTTTTALVGHILKTAGLRAPVCGNIGRPVTDLLLEPEDYDWIVAELSSFQIESAQGIRPEVAVWTTFTPDHLNRHGTLERYAAIKAGLLMQARRAVLNGDDAYLGARRSAWPDAWWTSTQAPAAVSLAGKDICIENRPVLPVSAVRLPGAHNLQNVLMAVAACHLTGVGDAAIASGVASFIGVPHRLEAVGEYRGVRFINDSKATNYDAALVGLTAVPAPSVLIAGGQAKTGESGPWLRAIAERCASVVLIGEAAPLFEKWLRAQDYRAVYTAHTLERAVPMAFEQARAQGAQCVLFSPACASFDQFRNFEERGDRFRALIAALAS.

112–118 provides a ligand contact to ATP; it reads GTNGKTT.

It belongs to the MurCDEF family.

The protein resides in the cytoplasm. The enzyme catalyses UDP-N-acetyl-alpha-D-muramoyl-L-alanine + D-glutamate + ATP = UDP-N-acetyl-alpha-D-muramoyl-L-alanyl-D-glutamate + ADP + phosphate + H(+). It participates in cell wall biogenesis; peptidoglycan biosynthesis. Its function is as follows. Cell wall formation. Catalyzes the addition of glutamate to the nucleotide precursor UDP-N-acetylmuramoyl-L-alanine (UMA). This Gloeobacter violaceus (strain ATCC 29082 / PCC 7421) protein is UDP-N-acetylmuramoylalanine--D-glutamate ligase.